The chain runs to 223 residues: MGQKVHPYGFRLGVNKPWRSRWFVERDYDKLLVEDVHLKRELKEKLKAAGVSSVEVERPGNKLRLIIRTARPGIIIGRKGAEIEKLKADLQKRTNREVFIDILEVNKPELDAQLIAENIALQLEKRVGFRRAMRKAVDSALRFGCKGIKVRVSGRLNGNEIARSEWYLQGRLPLHTLRADIDYGFAEAHTTYGIIGVKTWVYRGDIYQQRRREPQAAVGTSVF.

Positions 38–106 (LKRELKEKLK…EVFIDILEVN (69 aa)) constitute a KH type-2 domain.

The protein belongs to the universal ribosomal protein uS3 family. As to quaternary structure, part of the 30S ribosomal subunit. Forms a tight complex with proteins S10 and S14.

Functionally, binds the lower part of the 30S subunit head. Binds mRNA in the 70S ribosome, positioning it for translation. The protein is Small ribosomal subunit protein uS3 of Acidobacterium capsulatum (strain ATCC 51196 / DSM 11244 / BCRC 80197 / JCM 7670 / NBRC 15755 / NCIMB 13165 / 161).